Consider the following 485-residue polypeptide: MTITPQHLIALLPLLIVGLTVVVVMLSIAWRRNHFLNATLSVIGLNAALVSLWFVGQAGAMDVTPLMRVDGFAMLYTGLVQVASLATCTFAYPWLEGYNDNQEEFYLLVLIASLGGILLANANHLAALFLGIELISLPLFGLIGYAFRQKRSLEASIKYTILSAAASSFLLFGMALVYAQSGNLSFEALGKSLGDGMLHEPLLLAGFGLMIVGLGFKLSLVPFHLWTPDVYQGAPAPVSTFLATASKIAIFGVVMRLFLYAPVGDSEAVRVVLGIIAFASIIFGNLMALSQTNIKRLLGYSSISHLGYLLVALIALQSGEMSMEAVGVYLAGYLFSSLGAFGVVSLMSSPFRGPDADSLYSYRGLFWHRPVLAAVMTVMMLSLAGIPMTLGFIGKFYVLAVGVQASLWWLVAAVVVGSAIGLYYYLRVAVSLYLHAPQQPGRDAPTNWQYSAGGIVVLISALLVLVLGVWPQPLISLVQLAMPLM.

The next 14 helical transmembrane spans lie at 8–28, 35–55, 71–91, 105–125, 127–147, 159–179, 203–223, 235–255, 271–291, 297–317, 326–346, 373–393, 408–430, and 455–475; these read LIAL…MLSI, FLNA…LWFV, GFAM…CTFA, FYLL…ANHL, ALFL…GYAF, YTIL…LVYA, LLAG…LVPF, PAPV…GVVM, VVLG…ALSQ, LLGY…IALQ, VGVY…VVSL, AAVM…LGFI, WWLV…RVAV, and IVVL…QPLI.

The protein belongs to the complex I subunit 2 family. NDH-1 is composed of 13 different subunits. Subunits NuoA, H, J, K, L, M, N constitute the membrane sector of the complex.

It localises to the cell inner membrane. The enzyme catalyses a quinone + NADH + 5 H(+)(in) = a quinol + NAD(+) + 4 H(+)(out). NDH-1 shuttles electrons from NADH, via FMN and iron-sulfur (Fe-S) centers, to quinones in the respiratory chain. The immediate electron acceptor for the enzyme in this species is believed to be ubiquinone. Couples the redox reaction to proton translocation (for every two electrons transferred, four hydrogen ions are translocated across the cytoplasmic membrane), and thus conserves the redox energy in a proton gradient. The chain is NADH-quinone oxidoreductase subunit N from Salmonella gallinarum (strain 287/91 / NCTC 13346).